The following is a 148-amino-acid chain: Transcriptional regulator MraZ (148 aa).

SpoVT-AbrB domains are found at residues 5-53 (ETAI…AESE) and 82-125 (AAHL…SEQA).

The protein belongs to the MraZ family. In terms of assembly, forms oligomers.

It localises to the cytoplasm. It is found in the nucleoid. The chain is Transcriptional regulator MraZ from Stenotrophomonas maltophilia (strain R551-3).